The following is a 478-amino-acid chain: Glycogen synthase (478 aa).

Lys16 provides a ligand contact to ADP-alpha-D-glucose.

Belongs to the glycosyltransferase 1 family. Bacterial/plant glycogen synthase subfamily.

The catalysed reaction is [(1-&gt;4)-alpha-D-glucosyl](n) + ADP-alpha-D-glucose = [(1-&gt;4)-alpha-D-glucosyl](n+1) + ADP + H(+). The protein operates within glycan biosynthesis; glycogen biosynthesis. Its function is as follows. Synthesizes alpha-1,4-glucan chains using ADP-glucose. In Lachnoclostridium phytofermentans (strain ATCC 700394 / DSM 18823 / ISDg) (Clostridium phytofermentans), this protein is Glycogen synthase.